The following is a 292-amino-acid chain: 2-(5''-triphosphoribosyl)-3'-dephosphocoenzyme-A synthase (292 aa).

Belongs to the CitG/MdcB family.

The enzyme catalyses 3'-dephospho-CoA + ATP = 2'-(5''-triphospho-alpha-D-ribosyl)-3'-dephospho-CoA + adenine. Catalyzes the formation of 2-(5''-triphosphoribosyl)-3'-dephosphocoenzyme-A, the precursor of the prosthetic group of the holo-acyl carrier protein (gamma chain) of citrate lyase, from ATP and dephospho-CoA. This is 2-(5''-triphosphoribosyl)-3'-dephosphocoenzyme-A synthase from Escherichia coli O6:K15:H31 (strain 536 / UPEC).